Reading from the N-terminus, the 153-residue chain is uncharacterized protein (153 aa).

Residues 1-19 (MRKYIPLVLFIFSWPVLCA) form the signal peptide. Catalysis depends on residues R46, E54, and R88.

This sequence belongs to the thermonuclease family.

This is an uncharacterized protein from Escherichia coli O157:H7.